A 49-amino-acid chain; its full sequence is Thymopoietin-1 (49 aa).

Residues 4-47 (LEDPSVLTKEKLKSELVANNVTLPAGEQRKDVYVELYLQHLTAL) enclose the LEM-like domain. Residues 32 to 36 (RKDVY) form a biological activity region.

It belongs to the thymopoietin family.

In terms of biological role, hormone of the thymus with pleiotropic actions on prothymocytes, mature T-cells, the nicotinic acetylcholine receptor, and pituitary corticotrophs. In Bos taurus (Bovine), this protein is Thymopoietin-1.